The primary structure comprises 276 residues: Bis(5'-nucleosyl)-tetraphosphatase, symmetrical (276 aa).

The protein belongs to the Ap4A hydrolase family.

It catalyses the reaction P(1),P(4)-bis(5'-adenosyl) tetraphosphate + H2O = 2 ADP + 2 H(+). Hydrolyzes diadenosine 5',5'''-P1,P4-tetraphosphate to yield ADP. This is Bis(5'-nucleosyl)-tetraphosphatase, symmetrical from Psychromonas ingrahamii (strain DSM 17664 / CCUG 51855 / 37).